The primary structure comprises 95 residues: Small ribosomal subunit protein uS17 (95 aa).

It belongs to the universal ribosomal protein uS17 family. As to quaternary structure, part of the 30S ribosomal subunit.

Its function is as follows. One of the primary rRNA binding proteins, it binds specifically to the 5'-end of 16S ribosomal RNA. This is Small ribosomal subunit protein uS17 from Synechococcus sp. (strain CC9902).